Consider the following 118-residue polypeptide: Hisactophilin-2 (118 aa).

A lipid anchor (N-myristoyl glycine) is attached at G2. Residues 8–109 (AHNGHYLSAE…HVSTSHHHDH (102 aa)) form a contains several HHXH repeats region. 2 consecutive repeat copies span residues 34–46 (FHIE…VALR) and 74–86 (FHLE…VSIK). The tract at residues 34–86 (FHIENHGSKVALRTHCGKYVSIGDHKQVYLSHHLHGDHSLFHLEHHHGKVSIK) is 2 X 13 AA approximate repeats. The segment at 99–118 (GHVSTSHHHDHHATFEEHIL) is disordered.

Belongs to the hisactophilin family. In terms of assembly, homodimer or heterodimer of hatA and hatB, linked by a disulfide bond. Post-translationally, phosphorylated.

The protein resides in the cytoplasm. It localises to the cell membrane. Functionally, may act as an intracellular pH sensor that links chemotactic signals to responses in the microfilament system of the cells by nucleating actin polymerization or stabilizing the filaments. The polypeptide is Hisactophilin-2 (hatB) (Dictyostelium discoideum (Social amoeba)).